Consider the following 115-residue polypeptide: Succinate dehydrogenase assembly factor 3, mitochondrial (115 aa).

It belongs to the complex I LYR family. SDHAF3 subfamily. In terms of assembly, interacts with the iron-sulfur protein subunit within the SDH catalytic dimer.

The protein resides in the mitochondrion matrix. In terms of biological role, plays an essential role in the assembly of succinate dehydrogenase (SDH), an enzyme complex (also referred to as respiratory complex II) that is a component of both the tricarboxylic acid (TCA) cycle and the mitochondrial electron transport chain, and which couples the oxidation of succinate to fumarate with the reduction of ubiquinone (coenzyme Q) to ubiquinol. Promotes maturation of the iron-sulfur protein subunit of the SDH catalytic dimer, protecting it from the deleterious effects of oxidants. May act together with SDHAF1. In Nematostella vectensis (Starlet sea anemone), this protein is Succinate dehydrogenase assembly factor 3, mitochondrial (acn9).